Consider the following 173-residue polypeptide: MTYVMSLFLLGLVLGLVAVASNPSPYFGALSLVGVAAFGCGVLIWHGGSFLSLVLFLIYLGGMLVVFAYSAALAAEPYPETLGSWPVVSVYFGYFFFVFGILYTNMVLDEEVWWGVSGEMDWDAVFRGDMDGVSLMYSSGGGVLLLGAWVLLLTLLVVLELVRGLGRGALRAV.

Helical transmembrane passes span 1-21 (MTYV…AVAS), 25-45 (PYFG…VLIW), 53-73 (LVLF…SAAL), 82-102 (LGSW…FGIL), and 142-162 (GVLL…LELV).

This sequence belongs to the complex I subunit 6 family.

Its subcellular location is the mitochondrion membrane. It catalyses the reaction a ubiquinone + NADH + 5 H(+)(in) = a ubiquinol + NAD(+) + 4 H(+)(out). Functionally, core subunit of the mitochondrial membrane respiratory chain NADH dehydrogenase (Complex I) that is believed to belong to the minimal assembly required for catalysis. Complex I functions in the transfer of electrons from NADH to the respiratory chain. The immediate electron acceptor for the enzyme is believed to be ubiquinone. The protein is NADH-ubiquinone oxidoreductase chain 6 (MT-ND6) of Tetraodon nigroviridis (Spotted green pufferfish).